The following is a 339-amino-acid chain: Putative ABC transporter ATP-binding protein MG467 homolog (339 aa).

The interval 41–87 (KKTKKAKPAKVKKVKEPKAKAVKPEQVKPTKTTKAPKPKKPKKQGGL) is disordered. Residues 42–53 (KTKKAKPAKVKK) show a composition bias toward basic residues. A compositionally biased stretch (basic and acidic residues) spans 54–68 (VKEPKAKAVKPEQVK). The segment covering 74–83 (KAPKPKKPKK) has biased composition (basic residues). One can recognise an ABC transporter domain in the interval 112 to 338 (ISIDKMWKHV…IVSNELVRPL (227 aa)). Residue 150–157 (GPSGSGKT) coordinates ATP.

The protein belongs to the ABC transporter superfamily.

This Mycoplasma pneumoniae (strain ATCC 29342 / M129 / Subtype 1) (Mycoplasmoides pneumoniae) protein is Putative ABC transporter ATP-binding protein MG467 homolog.